A 493-amino-acid chain; its full sequence is Glycerol kinase (493 aa).

Thr12 lines the ADP pocket. ATP contacts are provided by Thr12, Thr13, and Ser14. Position 12 (Thr12) interacts with sn-glycerol 3-phosphate. Arg16 is a binding site for ADP. Sn-glycerol 3-phosphate is bound by residues Arg82, Glu83, Tyr132, and Asp239. Residues Arg82, Glu83, Tyr132, Asp239, and Gln240 each coordinate glycerol. 2 residues coordinate ADP: Thr261 and Gly303. Residues Thr261, Gly303, Gln307, and Gly402 each contribute to the ATP site. ADP contacts are provided by Gly402 and Asn406.

This sequence belongs to the FGGY kinase family.

The enzyme catalyses glycerol + ATP = sn-glycerol 3-phosphate + ADP + H(+). The protein operates within polyol metabolism; glycerol degradation via glycerol kinase pathway; sn-glycerol 3-phosphate from glycerol: step 1/1. In terms of biological role, key enzyme in the regulation of glycerol uptake and metabolism. Catalyzes the phosphorylation of glycerol to yield sn-glycerol 3-phosphate. The protein is Glycerol kinase of Thermococcus gammatolerans (strain DSM 15229 / JCM 11827 / EJ3).